We begin with the raw amino-acid sequence, 515 residues long: Maturase K (515 aa).

This sequence belongs to the intron maturase 2 family. MatK subfamily.

It localises to the plastid. It is found in the chloroplast. Its function is as follows. Usually encoded in the trnK tRNA gene intron. Probably assists in splicing its own and other chloroplast group II introns. This chain is Maturase K, found in Picea abies (Norway spruce).